The following is a 357-amino-acid chain: Maleylacetate reductase 1 (357 aa).

Belongs to the iron-containing alcohol dehydrogenase family.

It catalyses the reaction 3-oxoadipate + NAD(+) = maleylacetate + NADH + H(+). The enzyme catalyses 3-oxoadipate + NADP(+) = maleylacetate + NADPH + H(+). Its pathway is aromatic compound metabolism; 3-chlorocatechol degradation. In terms of biological role, plays a major role in the degradation of chloroaromatic compounds by channeling maleylacetate and some of its substituted derivatives into the 3-oxoadipate pathway. This enzyme converts maleylacetate and 2-chloromaleylacetate with similar efficiencies. This chain is Maleylacetate reductase 1 (macA), found in Rhodococcus opacus (Nocardia opaca).